Here is a 323-residue protein sequence, read N- to C-terminus: 4-hydroxy-3-methylbut-2-enyl diphosphate reductase (323 aa).

Residue Cys-21 participates in [4Fe-4S] cluster binding. Positions 50 and 83 each coordinate (2E)-4-hydroxy-3-methylbut-2-enyl diphosphate. Dimethylallyl diphosphate contacts are provided by His-50 and His-83. The isopentenyl diphosphate site is built by His-50 and His-83. Cys-105 serves as a coordination point for [4Fe-4S] cluster. Residue His-133 participates in (2E)-4-hydroxy-3-methylbut-2-enyl diphosphate binding. His-133 serves as a coordination point for dimethylallyl diphosphate. His-133 provides a ligand contact to isopentenyl diphosphate. Glu-135 functions as the Proton donor in the catalytic mechanism. Residue Thr-173 participates in (2E)-4-hydroxy-3-methylbut-2-enyl diphosphate binding. Cys-203 is a [4Fe-4S] cluster binding site. 4 residues coordinate (2E)-4-hydroxy-3-methylbut-2-enyl diphosphate: Ser-231, Ser-232, Asn-233, and Ser-276. Residues Ser-231, Ser-232, Asn-233, and Ser-276 each contribute to the dimethylallyl diphosphate site. The isopentenyl diphosphate site is built by Ser-231, Ser-232, Asn-233, and Ser-276.

The protein belongs to the IspH family. [4Fe-4S] cluster serves as cofactor.

It carries out the reaction isopentenyl diphosphate + 2 oxidized [2Fe-2S]-[ferredoxin] + H2O = (2E)-4-hydroxy-3-methylbut-2-enyl diphosphate + 2 reduced [2Fe-2S]-[ferredoxin] + 2 H(+). The enzyme catalyses dimethylallyl diphosphate + 2 oxidized [2Fe-2S]-[ferredoxin] + H2O = (2E)-4-hydroxy-3-methylbut-2-enyl diphosphate + 2 reduced [2Fe-2S]-[ferredoxin] + 2 H(+). The protein operates within isoprenoid biosynthesis; dimethylallyl diphosphate biosynthesis; dimethylallyl diphosphate from (2E)-4-hydroxy-3-methylbutenyl diphosphate: step 1/1. It functions in the pathway isoprenoid biosynthesis; isopentenyl diphosphate biosynthesis via DXP pathway; isopentenyl diphosphate from 1-deoxy-D-xylulose 5-phosphate: step 6/6. In terms of biological role, catalyzes the conversion of 1-hydroxy-2-methyl-2-(E)-butenyl 4-diphosphate (HMBPP) into a mixture of isopentenyl diphosphate (IPP) and dimethylallyl diphosphate (DMAPP). Acts in the terminal step of the DOXP/MEP pathway for isoprenoid precursor biosynthesis. In Cutibacterium acnes (strain DSM 16379 / KPA171202) (Propionibacterium acnes), this protein is 4-hydroxy-3-methylbut-2-enyl diphosphate reductase.